Consider the following 202-residue polypeptide: Na(+)-translocating NADH-quinone reductase subunit E (202 aa).

Helical transmembrane passes span Ser-11–Met-31, Ile-35–Ala-55, Phe-81–Val-101, Gly-114–Val-134, Val-144–Ile-164, and Leu-180–Ile-200.

The protein belongs to the NqrDE/RnfAE family. As to quaternary structure, composed of six subunits; NqrA, NqrB, NqrC, NqrD, NqrE and NqrF.

It localises to the cell inner membrane. It catalyses the reaction a ubiquinone + n Na(+)(in) + NADH + H(+) = a ubiquinol + n Na(+)(out) + NAD(+). NQR complex catalyzes the reduction of ubiquinone-1 to ubiquinol by two successive reactions, coupled with the transport of Na(+) ions from the cytoplasm to the periplasm. NqrA to NqrE are probably involved in the second step, the conversion of ubisemiquinone to ubiquinol. This chain is Na(+)-translocating NADH-quinone reductase subunit E, found in Cellvibrio japonicus (strain Ueda107) (Pseudomonas fluorescens subsp. cellulosa).